Consider the following 504-residue polypeptide: MKNEKRKTGIEPKVFFPPLIIVGILCWLTVRDLDAANVVINAVFSYVTNVWGWAFEWYMVVMLFGWFWLVFGPYAKKRLGNEPPEFSTASWIFMMFASCTSAAVLFWGSIEIYYYISTPPFGLEPNSTGAKELGLAYSLFHWGPLPWATYSFLSVAFAYFFFVRKMEVIRPSSTLVPLVGEKHAKGLFGTIVDNFYLVALIFAMGTSLGLATPLVTECMQWLFGIPHTLQLDAIIITCWIILHAICVACGLQKGGRIPSDVRSYLSFLMLGWVFIVSGASFIMNYFTDSVGMLLMYLPRMLFYTDPIAKGGFPQGWTVFYWAWWVIYAIQMSIFLARISRGRTVRELCFGMVMGLTASTWILWTVLGSNTLLLMDKNIINIPNLIEQYGVARAIIETWAALPLSTATMWGFFILCFIATVTLVNACSYTLAMSTCREVRDGEEPPLLVRIGWSILVGIIGIVLLALGGLKPIQTAIIAGGCPLFFVNIMVTLSFIKDAKQNWKD.

12 consecutive transmembrane segments (helical) span residues 10–30, 51–71, 92–112, 143–163, 195–215, 231–251, 263–283, 316–336, 347–367, 398–418, 446–466, and 475–495; these read IEPKVFFPPLIIVGILCWLTV, WGWAFEWYMVVMLFGWFWLVF, IFMMFASCTSAAVLFWGSIEI, GPLPWATYSFLSVAFAYFFFV, FYLVALIFAMGTSLGLATPLV, LDAIIITCWIILHAICVACGL, SYLSFLMLGWVFIVSGASFIM, WTVFYWAWWVIYAIQMSIFLA, LCFGMVMGLTASTWILWTVLG, WAALPLSTATMWGFFILCFIA, LLVRIGWSILVGIIGIVLLAL, and AIIAGGCPLFFVNIMVTLSFI.

This sequence belongs to the BCCT transporter (TC 2.A.15) family. CaiT subfamily. Homotrimer.

The protein localises to the cell inner membrane. It carries out the reaction 4-(trimethylamino)butanoate(in) + (R)-carnitine(out) = 4-(trimethylamino)butanoate(out) + (R)-carnitine(in). Its pathway is amine and polyamine metabolism; carnitine metabolism. Catalyzes the exchange of L-carnitine for gamma-butyrobetaine. The sequence is that of L-carnitine/gamma-butyrobetaine antiporter from Shigella flexneri serotype 5b (strain 8401).